The chain runs to 241 residues: Carboxy-S-adenosyl-L-methionine synthase (241 aa).

Residues tyrosine 38, glycine 63–serine 65, aspartate 88–asparagine 89, aspartate 116–isoleucine 117, asparagine 131, and arginine 198 contribute to the S-adenosyl-L-methionine site.

The protein belongs to the class I-like SAM-binding methyltransferase superfamily. Cx-SAM synthase family. Homodimer.

It carries out the reaction prephenate + S-adenosyl-L-methionine = carboxy-S-adenosyl-L-methionine + 3-phenylpyruvate + H2O. Functionally, catalyzes the conversion of S-adenosyl-L-methionine (SAM) to carboxy-S-adenosyl-L-methionine (Cx-SAM). The protein is Carboxy-S-adenosyl-L-methionine synthase of Glaesserella parasuis serovar 5 (strain SH0165) (Haemophilus parasuis).